A 123-amino-acid chain; its full sequence is Large ribosomal subunit protein uL18 (123 aa).

This sequence belongs to the universal ribosomal protein uL18 family. As to quaternary structure, part of the 50S ribosomal subunit; part of the 5S rRNA/L5/L18/L25 subcomplex. Contacts the 5S and 23S rRNAs.

Its function is as follows. This is one of the proteins that bind and probably mediate the attachment of the 5S RNA into the large ribosomal subunit, where it forms part of the central protuberance. The polypeptide is Large ribosomal subunit protein uL18 (Chlamydia abortus (strain DSM 27085 / S26/3) (Chlamydophila abortus)).